The primary structure comprises 385 residues: MDPFRFQVEARAGRARVGRLFTPHGAVETPLFMPVGTAGSVKGLMPKDLEAIGSQVLLTNTYHLLLRPGPERVRALGGLHGFAGWKGPWLTDSGGFQVMSLGHMRRIDEEGVVFQSHLDGRLIKLTPERSIAVQEALGADLIMAFDECPPYPSPREYLEASLERTLRWLERSLKAKTRPDQALFGIAQGGTDPELRRRSTLETIRFDLPGYAIGGLAVGEPKEAMFAMVELSTRLLPEDRPRYLMGVGHPEDLVAAMGLGVDLFDCVYPTRTGRFGSALVPEGRLNLKNARFLEDRRPLEEGCDCYTCQTFGRAYLAHLVRAGEMLGGILLSLHNLRHLHRLTEAARQAIREGRYGDFAREFARRRFGREVPPWFREALAAGGHG.

Residue aspartate 92 is the Proton acceptor of the active site. Substrate is bound by residues 92–96 (DSGGF), aspartate 146, glutamine 188, and glycine 215. An RNA binding region spans residues 246 to 252 (GVGHPED). Aspartate 265 functions as the Nucleophile in the catalytic mechanism. The RNA binding; important for wobble base 34 recognition stretch occupies residues 270-274 (TRTGR). Zn(2+) is bound by residues cysteine 303, cysteine 305, cysteine 308, and histidine 334.

It belongs to the queuine tRNA-ribosyltransferase family. Homodimer. Within each dimer, one monomer is responsible for RNA recognition and catalysis, while the other monomer binds to the replacement base PreQ1. The cofactor is Zn(2+).

The enzyme catalyses 7-aminomethyl-7-carbaguanine + guanosine(34) in tRNA = 7-aminomethyl-7-carbaguanosine(34) in tRNA + guanine. It functions in the pathway tRNA modification; tRNA-queuosine biosynthesis. Its function is as follows. Catalyzes the base-exchange of a guanine (G) residue with the queuine precursor 7-aminomethyl-7-deazaguanine (PreQ1) at position 34 (anticodon wobble position) in tRNAs with GU(N) anticodons (tRNA-Asp, -Asn, -His and -Tyr). Catalysis occurs through a double-displacement mechanism. The nucleophile active site attacks the C1' of nucleotide 34 to detach the guanine base from the RNA, forming a covalent enzyme-RNA intermediate. The proton acceptor active site deprotonates the incoming PreQ1, allowing a nucleophilic attack on the C1' of the ribose to form the product. After dissociation, two additional enzymatic reactions on the tRNA convert PreQ1 to queuine (Q), resulting in the hypermodified nucleoside queuosine (7-(((4,5-cis-dihydroxy-2-cyclopenten-1-yl)amino)methyl)-7-deazaguanosine). The chain is Queuine tRNA-ribosyltransferase from Thermus thermophilus (strain ATCC 27634 / DSM 579 / HB8).